A 339-amino-acid polypeptide reads, in one-letter code: Ketol-acid reductoisomerase (NADP(+)) (339 aa).

Positions 1 to 182 constitute a KARI N-terminal Rossmann domain; the sequence is MRVYYDRDAD…GGGRAGVIET (182 aa). NADP(+) contacts are provided by residues 24–27, Arg-48, Ser-51, Thr-53, and 83–86; these read YGSQ and DELQ. Residue His-108 is part of the active site. Gly-134 serves as a coordination point for NADP(+). Residues 183 to 328 form the KARI C-terminal knotted domain; sequence TFKEECETDL…KKLRSMMPWI (146 aa). Mg(2+) contacts are provided by Asp-191, Glu-195, Glu-227, and Glu-231. Ser-252 is a substrate binding site.

It belongs to the ketol-acid reductoisomerase family. Requires Mg(2+) as cofactor.

It carries out the reaction (2R)-2,3-dihydroxy-3-methylbutanoate + NADP(+) = (2S)-2-acetolactate + NADPH + H(+). The catalysed reaction is (2R,3R)-2,3-dihydroxy-3-methylpentanoate + NADP(+) = (S)-2-ethyl-2-hydroxy-3-oxobutanoate + NADPH + H(+). The protein operates within amino-acid biosynthesis; L-isoleucine biosynthesis; L-isoleucine from 2-oxobutanoate: step 2/4. Its pathway is amino-acid biosynthesis; L-valine biosynthesis; L-valine from pyruvate: step 2/4. In terms of biological role, involved in the biosynthesis of branched-chain amino acids (BCAA). Catalyzes an alkyl-migration followed by a ketol-acid reduction of (S)-2-acetolactate (S2AL) to yield (R)-2,3-dihydroxy-isovalerate. In the isomerase reaction, S2AL is rearranged via a Mg-dependent methyl migration to produce 3-hydroxy-3-methyl-2-ketobutyrate (HMKB). In the reductase reaction, this 2-ketoacid undergoes a metal-dependent reduction by NADPH to yield (R)-2,3-dihydroxy-isovalerate. The chain is Ketol-acid reductoisomerase (NADP(+)) from Bartonella tribocorum (strain CIP 105476 / IBS 506).